Consider the following 110-residue polypeptide: Phosphoribosyl-AMP cyclohydrolase (110 aa).

D80 is a Mg(2+) binding site. C81 is a Zn(2+) binding site. Mg(2+) is bound by residues D82 and D84. C97 and C104 together coordinate Zn(2+).

Belongs to the PRA-CH family. Homodimer. The cofactor is Mg(2+). Zn(2+) is required as a cofactor.

It localises to the cytoplasm. It catalyses the reaction 1-(5-phospho-beta-D-ribosyl)-5'-AMP + H2O = 1-(5-phospho-beta-D-ribosyl)-5-[(5-phospho-beta-D-ribosylamino)methylideneamino]imidazole-4-carboxamide. It participates in amino-acid biosynthesis; L-histidine biosynthesis; L-histidine from 5-phospho-alpha-D-ribose 1-diphosphate: step 3/9. In terms of biological role, catalyzes the hydrolysis of the adenine ring of phosphoribosyl-AMP. The sequence is that of Phosphoribosyl-AMP cyclohydrolase from Clostridium botulinum (strain ATCC 19397 / Type A).